The sequence spans 419 residues: DNA ligase (419 aa).

Residues 1-120 (MLNQFPGQYS…ARQKRGAHTN (120 aa)) are NTD. The AD domain stretch occupies residues 121 to 317 (RGMIPPMLVK…NYHSAHLAKL (197 aa)). Residues Gln-149, Lys-151, Glu-203, and Phe-232 each contribute to the ATP site. Lys-151 functions as the N6-AMP-lysine intermediate in the catalytic mechanism. An a divalent metal cation-binding site is contributed by Glu-203. An a divalent metal cation-binding site is contributed by Glu-291. Residues Ile-294 and Lys-316 each contribute to the ATP site. Residues 318 to 419 (KPLLDAEFIL…REPINVLEII (102 aa)) form an OB domain region.

The protein belongs to the ATP-dependent DNA ligase family. A divalent metal cation serves as cofactor.

The protein resides in the virion. It carries out the reaction ATP + (deoxyribonucleotide)n-3'-hydroxyl + 5'-phospho-(deoxyribonucleotide)m = (deoxyribonucleotide)n+m + AMP + diphosphate.. Very low-fidelity DNA ligase that seals nicks in double-stranded DNA during DNA repair. Together with the viral repair DNA polymerase X, fills the single nucleotide gaps generated by the AP endonuclease. It is not essential for viral replication and recombination. Displays a very low adenylation activity towards DNA with 3'-dideoxy- or 3'-amino-terminated nicks compared to regular nick DNA. The chain is DNA ligase (LIG) from Ornithodoros (relapsing fever ticks).